Here is a 44-residue protein sequence, read N- to C-terminus: Photosystem I reaction center subunit IX (44 aa).

A helical membrane pass occupies residues 7–27; sequence YLSVAPVLSTLWFASLAGLLI.

The protein belongs to the PsaJ family.

It is found in the plastid. It localises to the chloroplast thylakoid membrane. May help in the organization of the PsaE and PsaF subunits. The polypeptide is Photosystem I reaction center subunit IX (Barbarea verna (Land cress)).